A 686-amino-acid chain; its full sequence is Acyl-CoA synthetase short-chain family member 3, mitochondrial (686 aa).

The transit peptide at Met-1–Gly-29 directs the protein to the mitochondrion. Glu-227–Arg-230 lines the CoA pocket. Residues Gly-425–Arg-427 and Asp-446–Thr-451 contribute to the ATP site. N6-succinyllysine is present on Lys-518. Lys-524 carries the post-translational modification N6-acetyllysine. Asp-539, Arg-554, and Arg-565 together coordinate ATP. Arg-624 serves as a coordination point for CoA.

Belongs to the ATP-dependent AMP-binding enzyme family.

The protein localises to the mitochondrion matrix. The enzyme catalyses acetate + ATP + CoA = acetyl-CoA + AMP + diphosphate. It catalyses the reaction propanoate + ATP + CoA = propanoyl-CoA + AMP + diphosphate. The catalysed reaction is butanoate + ATP + CoA = butanoyl-CoA + AMP + diphosphate. In terms of biological role, catalyzes the synthesis of acetyl-CoA from short-chain fatty acids. Propionate is the preferred substrate. Can utilize acetate and butyrate with a much lower affinity. This Homo sapiens (Human) protein is Acyl-CoA synthetase short-chain family member 3, mitochondrial (ACSS3).